The following is a 524-amino-acid chain: Cytochrome P450 1A1 (524 aa).

The tract at residues T33–P44 is mitochondrial targeting signal. The O-linked (GlcNAc) serine glycan is linked to S71. Position 228 (F228) interacts with substrate. Residue C461 coordinates heme.

The protein belongs to the cytochrome P450 family. Both Cytochrome P450MT2A and Cytochrome P450MT2B interact with cytosolic chaperones HSP70 and HSP90; this interaction is required for initial targeting to mitochondria. P450MT2B interacts (via mitochondrial targeting signal) with TOMM40 (via N-terminus); this interaction is required for translocation across the mitochondrial outer membrane. Heme is required as a cofactor. Post-translationally, two forms; MT2A (long form) and MT2B (short form); are produced by NH2-terminal proteolytic cleavage. This cleavage activates a cryptic mitochondrial targeting signal. As to expression, liver.

It localises to the cytoplasm. The protein resides in the endoplasmic reticulum membrane. The protein localises to the mitochondrion inner membrane. It is found in the microsome membrane. The catalysed reaction is an organic molecule + reduced [NADPH--hemoprotein reductase] + O2 = an alcohol + oxidized [NADPH--hemoprotein reductase] + H2O + H(+). It catalyses the reaction estrone + reduced [NADPH--hemoprotein reductase] + O2 = 2-hydroxyestrone + oxidized [NADPH--hemoprotein reductase] + H2O + H(+). It carries out the reaction estrone + reduced [NADPH--hemoprotein reductase] + O2 = 4-hydroxyestrone + oxidized [NADPH--hemoprotein reductase] + H2O + H(+). The enzyme catalyses estrone + reduced [NADPH--hemoprotein reductase] + O2 = 6alpha-hydroxyestrone + oxidized [NADPH--hemoprotein reductase] + H2O + H(+). The catalysed reaction is estrone + reduced [NADPH--hemoprotein reductase] + O2 = 15alpha-hydroxyestrone + oxidized [NADPH--hemoprotein reductase] + H2O + H(+). It catalyses the reaction estrone + reduced [NADPH--hemoprotein reductase] + O2 = 16alpha-hydroxyestrone + oxidized [NADPH--hemoprotein reductase] + H2O + H(+). It carries out the reaction 17beta-estradiol + reduced [NADPH--hemoprotein reductase] + O2 = 2-hydroxy-17beta-estradiol + oxidized [NADPH--hemoprotein reductase] + H2O + H(+). The enzyme catalyses 17beta-estradiol + reduced [NADPH--hemoprotein reductase] + O2 = 4-hydroxy-17beta-estradiol + oxidized [NADPH--hemoprotein reductase] + H2O + H(+). The catalysed reaction is 17beta-estradiol + reduced [NADPH--hemoprotein reductase] + O2 = 6alpha-hydroxy-17beta-estradiol + oxidized [NADPH--hemoprotein reductase] + H2O + H(+). It catalyses the reaction 17beta-estradiol + reduced [NADPH--hemoprotein reductase] + O2 = 7alpha-hydroxy-17beta-estradiol + oxidized [NADPH--hemoprotein reductase] + H2O + H(+). It carries out the reaction 17beta-estradiol + reduced [NADPH--hemoprotein reductase] + O2 = 15alpha-hydroxy-17beta-estradiol + oxidized [NADPH--hemoprotein reductase] + H2O + H(+). The enzyme catalyses (5Z,8Z,11Z)-eicosatrienoate + reduced [NADPH--hemoprotein reductase] + O2 = 19-hydroxy-(5Z,8Z,11Z)-eicosatrienoate + oxidized [NADPH--hemoprotein reductase] + H2O + H(+). The catalysed reaction is (5Z,8Z,11Z,14Z)-eicosatetraenoate + reduced [NADPH--hemoprotein reductase] + O2 = 16-hydroxy-(5Z,8Z,11Z,14Z)-eicosatetraenoate + oxidized [NADPH--hemoprotein reductase] + H2O + H(+). It catalyses the reaction (5Z,8Z,11Z,14Z)-eicosatetraenoate + reduced [NADPH--hemoprotein reductase] + O2 = 17-hydroxy-(5Z,8Z,11Z,14Z)-eicosatetraenoate + oxidized [NADPH--hemoprotein reductase] + H2O + H(+). It carries out the reaction (5Z,8Z,11Z,14Z)-eicosatetraenoate + reduced [NADPH--hemoprotein reductase] + O2 = 18-hydroxy-(5Z,8Z,11Z,14Z)-eicosatetraenoate + oxidized [NADPH--hemoprotein reductase] + H2O + H(+). The enzyme catalyses (5Z,8Z,11Z,14Z)-eicosatetraenoate + reduced [NADPH--hemoprotein reductase] + O2 = 19-hydroxy-(5Z,8Z,11Z,14Z)-eicosatetraenoate + oxidized [NADPH--hemoprotein reductase] + H2O + H(+). The catalysed reaction is (5Z,8Z,11Z,14Z,17Z)-eicosapentaenoate + reduced [NADPH--hemoprotein reductase] + O2 = 19-hydroxy-(5Z,8Z,11Z,14Z,17Z)-eicosapentaenoate + oxidized [NADPH--hemoprotein reductase] + H2O + H(+). It catalyses the reaction (5Z,8Z,11Z,14Z)-eicosatetraenoate + reduced [NADPH--hemoprotein reductase] + O2 = (8R,9S)-epoxy-(5Z,11Z,14Z)-eicosatrienoate + oxidized [NADPH--hemoprotein reductase] + H2O + H(+). It carries out the reaction (5Z,8Z,11Z,14Z)-eicosatetraenoate + reduced [NADPH--hemoprotein reductase] + O2 = (11R,12S)-epoxy-(5Z,8Z,14Z)-eicosatrienoate + oxidized [NADPH--hemoprotein reductase] + H2O + H(+). The enzyme catalyses (5Z,8Z,11Z,14Z)-eicosatetraenoate + reduced [NADPH--hemoprotein reductase] + O2 = (11S,12R)-epoxy-(5Z,8Z,14Z)-eicosatrienoate + oxidized [NADPH--hemoprotein reductase] + H2O + H(+). The catalysed reaction is (5Z,8Z,11Z,14Z)-eicosatetraenoate + reduced [NADPH--hemoprotein reductase] + O2 = (14R,15S)-epoxy-(5Z,8Z,11Z)-eicosatrienoate + oxidized [NADPH--hemoprotein reductase] + H2O + H(+). It catalyses the reaction (5Z,8Z,11Z,14Z,17Z)-eicosapentaenoate + reduced [NADPH--hemoprotein reductase] + O2 = (17R,18S)-epoxy-(5Z,8Z,11Z,14Z)-eicosatetraenoate + oxidized [NADPH--hemoprotein reductase] + H2O + H(+). It carries out the reaction (4Z,7Z,10Z,13Z,16Z,19Z)-docosahexaenoate + reduced [NADPH--hemoprotein reductase] + O2 = (19S,20R)-epoxy-(4Z,7Z,10Z,13Z,16Z)-docosapentaenoate + oxidized [NADPH--hemoprotein reductase] + H2O + H(+). The enzyme catalyses (4Z,7Z,10Z,13Z,16Z,19Z)-docosahexaenoate + reduced [NADPH--hemoprotein reductase] + O2 = (19R,20S)-epoxy-(4Z,7Z,10Z,13Z,16Z)-docosapentaenoate + oxidized [NADPH--hemoprotein reductase] + H2O + H(+). The catalysed reaction is all-trans-retinol + reduced [NADPH--hemoprotein reductase] + O2 = all-trans-retinal + oxidized [NADPH--hemoprotein reductase] + 2 H2O + H(+). It catalyses the reaction all-trans-retinal + reduced [NADPH--hemoprotein reductase] + O2 = all-trans-retinoate + oxidized [NADPH--hemoprotein reductase] + H2O + 2 H(+). It carries out the reaction (13S)-hydroperoxy-(9Z,11E)-octadecadienoate = 13-oxo-(9Z,11E)-octadecadienoate + H2O. The enzyme catalyses (12S)-hydroperoxy-(5Z,8Z,10E,14Z)-eicosatetraenoate = 12-oxo-(5Z,8Z,10E,14Z)-eicosatetraenoate + H2O. The catalysed reaction is (15S)-hydroperoxy-(5Z,8Z,11Z,13E)-eicosatetraenoate = 15-oxo-(5Z,8Z,11Z,13E)-eicosatetraenoate + H2O. It catalyses the reaction (5S)-hydroperoxy-(6E,8Z,11Z,14Z)-eicosatetraenoate = 5-oxo-(6E,8Z,11Z,14Z)-eicosatetraenoate + H2O. Its pathway is steroid hormone biosynthesis. It functions in the pathway lipid metabolism; fatty acid metabolism. The protein operates within cofactor metabolism; retinol metabolism. Functionally, a cytochrome P450 monooxygenase involved in the metabolism of various endogenous substrates, including fatty acids, steroid hormones and vitamins. Mechanistically, uses molecular oxygen inserting one oxygen atom into a substrate, and reducing the second into a water molecule, with two electrons provided by NADPH via cytochrome P450 reductase (CPR; NADPH-ferrihemoprotein reductase). Catalyzes the hydroxylation of carbon-hydrogen bonds. Exhibits high catalytic activity for the formation of hydroxyestrogens from estrone (E1) and 17beta-estradiol (E2), namely 2-hydroxy E1 and E2, as well as D-ring hydroxylated E1 and E2 at the C15alpha and C16alpha positions. Displays different regioselectivities for polyunsaturated fatty acids (PUFA) hydroxylation. Catalyzes the epoxidation of double bonds of certain PUFA. Converts arachidonic acid toward epoxyeicosatrienoic acid (EET) regioisomers, 8,9-, 11,12-, and 14,15-EET, that function as lipid mediators in the vascular system. Displays an absolute stereoselectivity in the epoxidation of eicosapentaenoic acid (EPA) producing the 17(R),18(S) enantiomer. May play an important role in all-trans retinoic acid biosynthesis in extrahepatic tissues. Catalyzes two successive oxidative transformation of all-trans retinol to all-trans retinal and then to the active form all-trans retinoic acid. May also participate in eicosanoids metabolism by converting hydroperoxide species into oxo metabolites (lipoxygenase-like reaction, NADPH-independent). This Rattus norvegicus (Rat) protein is Cytochrome P450 1A1.